A 237-amino-acid chain; its full sequence is DNA repair protein RecO (237 aa).

The protein belongs to the RecO family.

In terms of biological role, involved in DNA repair and RecF pathway recombination. In Cereibacter sphaeroides (strain ATCC 17025 / ATH 2.4.3) (Rhodobacter sphaeroides), this protein is DNA repair protein RecO.